We begin with the raw amino-acid sequence, 190 residues long: NADH-quinone oxidoreductase subunit B (190 aa).

Residues C69, C70, C134, and C164 each coordinate [4Fe-4S] cluster.

This sequence belongs to the complex I 20 kDa subunit family. NDH-1 is composed of 14 different subunits. Subunits NuoB, C, D, E, F, and G constitute the peripheral sector of the complex. Requires [4Fe-4S] cluster as cofactor.

It is found in the cell inner membrane. The enzyme catalyses a quinone + NADH + 5 H(+)(in) = a quinol + NAD(+) + 4 H(+)(out). Functionally, NDH-1 shuttles electrons from NADH, via FMN and iron-sulfur (Fe-S) centers, to quinones in the respiratory chain. Couples the redox reaction to proton translocation (for every two electrons transferred, four hydrogen ions are translocated across the cytoplasmic membrane), and thus conserves the redox energy in a proton gradient. The polypeptide is NADH-quinone oxidoreductase subunit B (Hyphomonas neptunium (strain ATCC 15444)).